Reading from the N-terminus, the 170-residue chain is Peptide deformylase (170 aa).

The Fe cation site is built by cysteine 91 and histidine 133. Glutamate 134 is a catalytic residue. Histidine 137 serves as a coordination point for Fe cation.

Belongs to the polypeptide deformylase family. The cofactor is Fe(2+).

It catalyses the reaction N-terminal N-formyl-L-methionyl-[peptide] + H2O = N-terminal L-methionyl-[peptide] + formate. Its function is as follows. Removes the formyl group from the N-terminal Met of newly synthesized proteins. Requires at least a dipeptide for an efficient rate of reaction. N-terminal L-methionine is a prerequisite for activity but the enzyme has broad specificity at other positions. In Glaesserella parasuis serovar 5 (strain SH0165) (Haemophilus parasuis), this protein is Peptide deformylase.